We begin with the raw amino-acid sequence, 355 residues long: WD repeat domain phosphoinositide-interacting protein 4 (355 aa).

WD repeat units lie at residues 2–40 (SQQR…EKGH) and 185–225 (AHQS…QLVE). The L/FRRG motif signature appears at 226–229 (LRRG). The stretch at 230 to 269 (TDPATLYCINFSHDSSFLCSSSDKGTVHIFALKDTKLNRR) is one WD 3 repeat.

This sequence belongs to the WD repeat PROPPIN family.

The protein localises to the preautophagosomal structure. In terms of biological role, component of the autophagy machinery that controls the major intracellular degradation process by which cytoplasmic materials are packaged into autophagosomes and delivered to lysosomes for degradation. Binds phosphatidylinositol 3-phosphate (PtdIns3P). The sequence is that of WD repeat domain phosphoinositide-interacting protein 4 (wdr45) from Xenopus laevis (African clawed frog).